Reading from the N-terminus, the 98-residue chain is Large ribosomal subunit protein uL23 (98 aa).

It belongs to the universal ribosomal protein uL23 family. As to quaternary structure, part of the 50S ribosomal subunit. Contacts protein L29, and trigger factor when it is bound to the ribosome.

In terms of biological role, one of the early assembly proteins it binds 23S rRNA. One of the proteins that surrounds the polypeptide exit tunnel on the outside of the ribosome. Forms the main docking site for trigger factor binding to the ribosome. The polypeptide is Large ribosomal subunit protein uL23 (Limosilactobacillus reuteri (strain DSM 20016) (Lactobacillus reuteri)).